Reading from the N-terminus, the 264-residue chain is Sirohydrochlorin cobaltochelatase (264 aa).

Co-sirohydrochlorin contacts are provided by Gly45, Ile84, Ile85, Asp88, Glu89, and Lys92. The active-site Proton acceptor is the His145. Residues His145 and Glu175 each coordinate Co(2+). Co-sirohydrochlorin contacts are provided by Leu202, Val203, and His207. Residue His207 coordinates Co(2+).

It belongs to the CbiK family. In terms of assembly, homotrimer.

The catalysed reaction is Co-sirohydrochlorin + 2 H(+) = sirohydrochlorin + Co(2+). It catalyses the reaction Co-precorrin-2 + 3 H(+) = precorrin-2 + Co(2+). It participates in cofactor biosynthesis; adenosylcobalamin biosynthesis; cob(II)yrinate a,c-diamide from sirohydrochlorin (anaerobic route): step 1/10. In terms of biological role, cobalt chelatase responsible for the insertion of cobalt during anaerobic cobalamin biosynthesis. Can catalyze the insertion of Co(2+) into either sirohydrochlorin or precorrin-2. It is not clear which is the natural substrate in Salmonella. This is Sirohydrochlorin cobaltochelatase from Salmonella typhimurium (strain LT2 / SGSC1412 / ATCC 700720).